We begin with the raw amino-acid sequence, 311 residues long: Aspartate carbamoyltransferase catalytic subunit (311 aa).

Arg55 and Thr56 together coordinate carbamoyl phosphate. Lys83 serves as a coordination point for L-aspartate. 3 residues coordinate carbamoyl phosphate: Arg105, His134, and Gln137. The L-aspartate site is built by Arg167 and Arg226. The carbamoyl phosphate site is built by Gly267 and Pro268.

It belongs to the aspartate/ornithine carbamoyltransferase superfamily. ATCase family. As to quaternary structure, heterododecamer (2C3:3R2) of six catalytic PyrB chains organized as two trimers (C3), and six regulatory PyrI chains organized as three dimers (R2).

The catalysed reaction is carbamoyl phosphate + L-aspartate = N-carbamoyl-L-aspartate + phosphate + H(+). It participates in pyrimidine metabolism; UMP biosynthesis via de novo pathway; (S)-dihydroorotate from bicarbonate: step 2/3. In terms of biological role, catalyzes the condensation of carbamoyl phosphate and aspartate to form carbamoyl aspartate and inorganic phosphate, the committed step in the de novo pyrimidine nucleotide biosynthesis pathway. This chain is Aspartate carbamoyltransferase catalytic subunit, found in Corynebacterium jeikeium (strain K411).